Here is a 544-residue protein sequence, read N- to C-terminus: Homeobox protein B-H1 (544 aa).

The span at 53–70 (STTTMSSGGSTTTASGIG) shows a compositional bias: low complexity. 4 disordered regions span residues 53–73 (STTT…GKPN), 92–179 (YKQQ…PPTA), 236–308 (GGVG…AFTD), and 471–544 (AANP…QIQV). Over residues 95–105 (QQHHQQLHHHN) the composition is skewed to basic residues. The segment covering 106 to 131 (NNNNSGSSGGSSPAHSNNNNNINGDN) has biased composition (low complexity). The span at 156–172 (THPHTHPHALMHPHGKL) shows a compositional bias: basic residues. Residues 247-262 (DLDDSSDYHEENEDCD) are compositionally biased toward acidic residues. Basic and acidic residues predominate over residues 266-282 (MDDHSVCSNGGKDDDGN). Residues 283-293 (SVKSGSTSDMS) show a composition bias toward polar residues. Positions 299–358 (QRKARTAFTDHQLQTLEKSFERQKYLSVQERQELAHKLDLSDCQVKTWYQNRRTKWKRQT) form a DNA-binding region, homeobox. Pro residues predominate over residues 476–485 (GPHPVAPPPS). A compositionally biased stretch (low complexity) spans 492–506 (PSGLVKPIPAHSASA). Over residues 507 to 516 (SPPPRPPSTP) the composition is skewed to pro residues.

The protein belongs to the Antp homeobox family. In terms of tissue distribution, B-H1 and B-H2 are abundant in the eye-antenna imaginal disk. Expressed in R1 and R6 cells throughout larval stage until 30 hours after puparium formation, at which time expression is seen in the anterior and posterior primary pigment cells. Coexpressed in embryonic glial cells, neurons of the CNS and PNS, most latitudinal anterior cells of the developing notum and the central circular region of the leg and antennal imaginal disk throughout larval development.

It localises to the nucleus. Its function is as follows. B-H1 and B-H2 are regulated by members of the wg signaling pathway; wg and dpp. B-H1 and B-H2 are coexpressed and functionally required in R1 and R6 receptor cells and primary pigment cells for normal eye development. Coexpression is also required for the fate determination of external sensory organs, formation of notal microchaetae, formation of presutural macrochaetae, antennal development and for distal leg morphogenesis; segmentation and specification of tarsal segments 3-5. The polypeptide is Homeobox protein B-H1 (B-H1) (Drosophila melanogaster (Fruit fly)).